The primary structure comprises 249 residues: Segregation and condensation protein A (249 aa).

The protein belongs to the ScpA family. In terms of assembly, component of a cohesin-like complex composed of ScpA, ScpB and the Smc homodimer, in which ScpA and ScpB bind to the head domain of Smc. The presence of the three proteins is required for the association of the complex with DNA.

It localises to the cytoplasm. Participates in chromosomal partition during cell division. May act via the formation of a condensin-like complex containing Smc and ScpB that pull DNA away from mid-cell into both cell halves. The sequence is that of Segregation and condensation protein A from Clostridium acetobutylicum (strain ATCC 824 / DSM 792 / JCM 1419 / IAM 19013 / LMG 5710 / NBRC 13948 / NRRL B-527 / VKM B-1787 / 2291 / W).